An 868-amino-acid polypeptide reads, in one-letter code: uncharacterized protein (868 aa).

It localises to the cytoplasm. It is found in the nucleus. This is an uncharacterized protein from Schizosaccharomyces pombe (strain 972 / ATCC 24843) (Fission yeast).